The sequence spans 198 residues: MEILNGPSGWIEVICGGMYSGKSEELIRRVRRAQIAKQKVQVFKHSLDIRYDKDYVASHTGLKIEAIPVSSSADIERLVEDDTQVVAIEEGQFFDMGIVKVCQRLADKGKRVIVAGLDQDFRGEPFGPMPYLMAVAEYVDKLHAICMKCGNVASRTQRIIDGKPAYYDDPIILVGAFETYEARCRNCHIVLRRDENEK.

ATP is bound by residues 16 to 23 (GGMYSGKS) and 89 to 92 (EEGQ). The active-site Proton acceptor is the Glu90. Zn(2+) is bound by residues Cys146, Cys149, Cys184, and Cys187.

The protein belongs to the thymidine kinase family. Homotetramer.

Its subcellular location is the cytoplasm. The catalysed reaction is thymidine + ATP = dTMP + ADP + H(+). This Dictyoglomus thermophilum (strain ATCC 35947 / DSM 3960 / H-6-12) protein is Thymidine kinase.